The following is a 163-amino-acid chain: MDEKDVATQPQETGQNPRLSGQDEDPGRPEGAEAPPSEGALAPHARRSEAVGPKPPAPGGKLLSLKGDRAFQRLRKGRAGRGRYVSVKWLPAAELRVGIVVSKKVGKAVVRNKVKRRLREILRRLHLPQAHLLVVASPEAREADFAELFRDVVRALRKSGLVQ.

Residues 1–68 (MDEKDVATQP…GGKLLSLKGD (68 aa)) form a disordered region. The span at 8–19 (TQPQETGQNPRL) shows a compositional bias: polar residues.

This sequence belongs to the RnpA family. In terms of assembly, consists of a catalytic RNA component (M1 or rnpB) and a protein subunit.

The catalysed reaction is Endonucleolytic cleavage of RNA, removing 5'-extranucleotides from tRNA precursor.. Its function is as follows. RNaseP catalyzes the removal of the 5'-leader sequence from pre-tRNA to produce the mature 5'-terminus. It can also cleave other RNA substrates such as 4.5S RNA. The protein component plays an auxiliary but essential role in vivo by binding to the 5'-leader sequence and broadening the substrate specificity of the ribozyme. The sequence is that of Ribonuclease P protein component from Thermus thermophilus (strain ATCC BAA-163 / DSM 7039 / HB27).